We begin with the raw amino-acid sequence, 466 residues long: Cytochrome b561 and DOMON domain-containing protein At3g59070 (466 aa).

The first 25 residues, 1-25, serve as a signal peptide directing secretion; the sequence is MSLSSRATLVVLCCLFMLIPSFTTA. Residues 57–172 enclose the DOMON domain; sequence LNSYLHFNYA…TVVNHLWQDG (116 aa). Residues 179-380 enclose the Cytochrome b561 domain; sequence RLGMHAMSGD…MEILQFKKRW (202 aa). 3 helical membrane-spanning segments follow: residues 219–239, 252–272, and 287–307; these read IHAIVNALSWGILMPIGVMAA, WFYIHVVCQTTGYFSGLIGGL, and TLHTVIGLLLFALGFLQILSL. Residues H220, H256, H289, and H325 each coordinate heme b. Helical transmembrane passes span 327–347 and 355–375; these read TMGYIVIVLSIYNIYKGLSIL and IAYTTIICCIAAFAVVMEILQ.

Requires heme b as cofactor.

The protein resides in the membrane. Functionally, may act as a catecholamine-responsive trans-membrane electron transporter. This is Cytochrome b561 and DOMON domain-containing protein At3g59070 from Arabidopsis thaliana (Mouse-ear cress).